Consider the following 453-residue polypeptide: tRNA modification GTPase MnmE (453 aa).

The (6S)-5-formyl-5,6,7,8-tetrahydrofolate site is built by Arg-22, Glu-79, and Lys-119. The region spanning 215–376 (GMKVVIAGRP…LKQHLKSLMG (162 aa)) is the TrmE-type G domain. A K(+)-binding site is contributed by Asn-225. GTP-binding positions include 225-230 (NAGKSS), 244-250 (TEIAGTT), 269-272 (DTAG), and 334-337 (NKAD). Residue Ser-229 participates in Mg(2+) binding. K(+) is bound by residues Thr-244, Ile-246, and Thr-249. Thr-250 contacts Mg(2+). Lys-453 is a binding site for (6S)-5-formyl-5,6,7,8-tetrahydrofolate.

It belongs to the TRAFAC class TrmE-Era-EngA-EngB-Septin-like GTPase superfamily. TrmE GTPase family. In terms of assembly, homodimer. Heterotetramer of two MnmE and two MnmG subunits. K(+) serves as cofactor.

It is found in the cytoplasm. Functionally, exhibits a very high intrinsic GTPase hydrolysis rate. Involved in the addition of a carboxymethylaminomethyl (cmnm) group at the wobble position (U34) of certain tRNAs, forming tRNA-cmnm(5)s(2)U34. In Shewanella sp. (strain MR-7), this protein is tRNA modification GTPase MnmE.